Reading from the N-terminus, the 132-residue chain is Small ribosomal subunit protein uS17c (132 aa).

The segment covering 1–11 (MLLLSSPFVSV) has biased composition (low complexity). Disordered regions lie at residues 1 to 23 (MLLLSSPFVSVSPPPPPLSSHGA) and 104 to 132 (PLPPRDTRRKSQLLPPLQSDDDQEPSSRE). The N-terminal 31 residues, 1–31 (MLLLSSPFVSVSPPPPPLSSHGARPALRIEA), are a transit peptide targeting the chloroplast. The segment covering 122-132 (SDDDQEPSSRE) has biased composition (acidic residues).

This sequence belongs to the universal ribosomal protein uS17 family. Part of the 30S ribosomal subunit.

It localises to the plastid. Its subcellular location is the chloroplast. Its function is as follows. One of the primary rRNA binding proteins, it binds specifically to the 5'-end of 16S ribosomal RNA. Functionally, in the hcf60 mutation the Activator tag is inserted 17 base pars upstream of the initiation codon. This mutation is seedling lethal, due to plastid ribosome insufficiency. However under non-light stressed conditions photosynthesis and oxygen evolution can occur. The sequence is that of Small ribosomal subunit protein uS17c (RPS17) from Zea mays (Maize).